The primary structure comprises 291 residues: MSDILKFGIPKGSLEDATVDLFAKAGWKISISSRSYFPGVDDAELNCKLIRPQEMGKYVERGTIDVGIAGRDWVRENDSDVVEVCEMVYSKVSRRPVRWVLVVAQDSKVQRPEDLAGATLSTELVGFTKRYFAERNIPVTVEFSWGATEAKVVDGLCDAIVEVTETGSTIRANNLRIVCDLMESVPVMIANRKSWEDPWKREKIETIATLLKSALAAEGMVGLKMNAPGDKADAITKVLPSQKAPTVSHLYNSDWVSIESILNEKEVRSIVPALLKLGAEGIVEYPLNKII.

Belongs to the ATP phosphoribosyltransferase family. Long subfamily. The cofactor is Mg(2+).

The protein resides in the cytoplasm. The catalysed reaction is 1-(5-phospho-beta-D-ribosyl)-ATP + diphosphate = 5-phospho-alpha-D-ribose 1-diphosphate + ATP. Its pathway is amino-acid biosynthesis; L-histidine biosynthesis; L-histidine from 5-phospho-alpha-D-ribose 1-diphosphate: step 1/9. Feedback inhibited by histidine. Functionally, catalyzes the condensation of ATP and 5-phosphoribose 1-diphosphate to form N'-(5'-phosphoribosyl)-ATP (PR-ATP). Has a crucial role in the pathway because the rate of histidine biosynthesis seems to be controlled primarily by regulation of HisG enzymatic activity. The sequence is that of ATP phosphoribosyltransferase from Geotalea daltonii (strain DSM 22248 / JCM 15807 / FRC-32) (Geobacter daltonii).